The following is a 64-amino-acid chain: Conotoxin reg3.16 (64 aa).

Residues 1–19 (MSKLGVFLTICLLLFPLTA) form the signal peptide. Residues 20–49 (LQLDGDQPADKPAQRKLKILPKRKHWTRFT) constitute a propeptide that is removed on maturation. 3 disulfides stabilise this stretch: cysteine 50–cysteine 64, cysteine 51–cysteine 60, and cysteine 56–cysteine 63.

Belongs to the conotoxin M superfamily. As to expression, expressed by the venom duct.

The protein resides in the secreted. This Conus regius (Crown cone) protein is Conotoxin reg3.16.